A 211-amino-acid chain; its full sequence is ATP phosphoribosyltransferase (211 aa).

This sequence belongs to the ATP phosphoribosyltransferase family. Short subfamily. Heteromultimer composed of HisG and HisZ subunits.

Its subcellular location is the cytoplasm. The catalysed reaction is 1-(5-phospho-beta-D-ribosyl)-ATP + diphosphate = 5-phospho-alpha-D-ribose 1-diphosphate + ATP. It participates in amino-acid biosynthesis; L-histidine biosynthesis; L-histidine from 5-phospho-alpha-D-ribose 1-diphosphate: step 1/9. In terms of biological role, catalyzes the condensation of ATP and 5-phosphoribose 1-diphosphate to form N'-(5'-phosphoribosyl)-ATP (PR-ATP). Has a crucial role in the pathway because the rate of histidine biosynthesis seems to be controlled primarily by regulation of HisG enzymatic activity. This is ATP phosphoribosyltransferase from Pseudomonas aeruginosa (strain UCBPP-PA14).